Reading from the N-terminus, the 138-residue chain is Small ribosomal subunit protein uS11c (138 aa).

The protein belongs to the universal ribosomal protein uS11 family. In terms of assembly, part of the 30S ribosomal subunit.

Its subcellular location is the plastid. It is found in the chloroplast. The protein is Small ribosomal subunit protein uS11c of Acorus calamus (Sweet flag).